A 1819-amino-acid polypeptide reads, in one-letter code: Non-reducing polyketide synthase 8 (1819 aa).

One can recognise a Starter acyltransferase (SAT) domain in the interval 38–265 (QLTLLSKQKQ…QKIINLPVYG (228 aa)). The 436-residue stretch at 405–840 (KSSIAIVGMS…GGNTMIAIEE (436 aa)) folds into the Ketosynthase family 3 (KS3) domain. Active-site for beta-ketoacyl synthase activity residues include Cys578, His714, and His758. Positions 943–1262 (FAFTGQGASY…SLSTLHCAGA (320 aa)) constitute a Malonyl-CoA:ACP transacylase (MAT) domain. Residues 1336–1476 (QRIIEESFDG…GDRSAWLSSW (141 aa)) are N-terminal hotdog fold. The 311-residue stretch at 1336–1646 (QRIIEESFDG…FRQYPRILLN (311 aa)) folds into the PKS/mFAS DH domain. Catalysis depends on His1368, which acts as the Proton acceptor; for dehydratase activity. Positions 1404–1642 (AMNVADLEVV…GGIKFRQYPR (239 aa)) are dehydratase (DH) domain. The segment at 1498 to 1646 (IANRLSHNMA…FRQYPRILLN (149 aa)) is C-terminal hotdog fold. Residue Asp1557 is the Proton donor; for dehydratase activity of the active site. One can recognise a Carrier domain in the interval 1741–1818 (VDTNSVASKA…DLRSWLMEYY (78 aa)). The residue at position 1778 (Ser1778) is an O-(pantetheine 4'-phosphoryl)serine.

Pantetheine 4'-phosphate serves as cofactor.

The protein operates within secondary metabolite biosynthesis. Functionally, non-reducing polyketide synthase; part of the gene cluster that mediates the biosynthesis of dibenzodioxocinones such as pestalotiollide B, a novel class of inhibitors against cholesterol ester transfer protein (CEPT). The biosynthesis initiates from condensation of acetate and malonate units catalyzed by the non-reducing PKS pks8/GME11356. Pks8/GME11356 lacks a thioesterase (TE) domain, which is important to the cyclizing of the third ring of atrochrysone carboxylic acid, and the esterase GME11355 might play the role of TE and catalyzes the cyclization reaction of the C ring. The lactamase-like protein GME11357 (or other beta-lactamases in Pestalotiopsis microspora) probably hydrolyzes the thioester bond between the ACP of pks8/GME11356 and the intermediate to release atrochrysone carboxylic acid, which is spontaneously dehydrates to form endocrocin anthrone. Endocrocin anthrone is further converted to emodin via the endocrocin intermediate. Emodin is then oxidized by several enzymes such as the Baeyer-Villiger oxidase GME11358, the oxidoreductase GME11367, the short chain dehydrogenase/reductase GME11373, as well as by other oxidoreductases from the cluster, to modify the A and C rings and open the B ring, and finally yield monodictyphenone. The prenyltransferase GME11375 may catalyze the addition reaction between the C5 side chains and the carbon bone of dibenzodioxocinones. The remaining biochemical reactions to the final product dibenzodioxocinones should be methylation catalyzed by methyltransferase GME11366 and reduction and lactonization reaction catalyzed by a series of oxidordeuctases. This is Non-reducing polyketide synthase 8 from Pestalotiopsis microspora.